The sequence spans 184 residues: MLKLRALAEAKAKAKEGQGQETTPQVIKPSLIRLKKDLENIDLSEQICEYTTYLDENPMRVNLAIKPDIGYYAGGTYYFNVFIKDTYPMEPPVVKCMHRIYHPNIDIDGNVCLNLLREDWTPALDIQSIIIGILFLFHEPNGRDPLNKDAAKTLIEDPLRFENKVNHSLRGNNIDGVWYDKIIY.

The UBC core domain occupies Pro-29–Ile-174. Cys-112 functions as the Glycyl thioester intermediate in the catalytic mechanism.

Belongs to the ubiquitin-conjugating enzyme family. UBC12 subfamily.

It catalyses the reaction [E1 NEDD8-activating enzyme]-S-[NEDD8 protein]-yl-L-cysteine + [E2 NEDD8-conjugating enzyme]-L-cysteine = [E1 NEDD8-activating enzyme]-L-cysteine + [E2 NEDD8-conjugating enzyme]-S-[NEDD8-protein]-yl-L-cysteine.. Its pathway is protein modification; protein neddylation. Its function is as follows. Accepts the ubiquitin-like protein NEDD8/RUB1 from the UBA3-ULA1 E1 complex and catalyzes its covalent attachment to other proteins. The sequence is that of NEDD8-conjugating enzyme UBC12 (UBC12) from Kluyveromyces lactis (strain ATCC 8585 / CBS 2359 / DSM 70799 / NBRC 1267 / NRRL Y-1140 / WM37) (Yeast).